The primary structure comprises 685 residues: MNQSRSRSDGGSEETLPQDHNHHENERRWQQERLHREEAYYQFINELNDEDYRLMRDHNLLGTPGEITSEELQQRLDGVKEQLASQPDLRDGTNYRDSEVPRESSHEDSLLEWLNTFRRTGNATRSGQNGNQTWRAVSRTNPNNGEFRFSLEIHVNHENRGFEIHGEDYTDIPLSDSNRDHTANRQQRSTSPVARRTRSQTSVNFNGSSSNIPRTRLASRGQNPAEGSFSTLGRLRNGIGGAAGIPRANASRTNFSSHTNQSGGSELRQREGQRFGAAHVWENGARSNVTVRNTNQRLEPIRLRSTSNSRSRSPIQRQSGTVYHNSQRESRPVQQTTRRSVRRRGRTRVFLEQDRERERRGTAYTPFSNSRLVSRITVEEGEESSRSSTAVRRHPTITLDLQVRRIRPGENRDRDSIANRTRSRVGLAENTVTIESNSGGFRRTISRLERSGIRTYVSTITVPLRRISENELVEPSSVALRSILRQIMTGFGELSSLMEADSESELQRNGQHLPDMHSELSNLGTDNNRSQHREGSSQDRQAQGDSTEMHGENETTQPHTRNSDSRGGRQLRNPNNLVETGTLPILRLAHFFLLNESDDDDRIRGLTKEQIDNLSTRHYEHNSIDSELGKICSVCISDYVTGNKLRQLPCMHEFHIHCIDRWLSENCTCPICRQPVLGSNIANNG.

Basic and acidic residues-rich tracts occupy residues 1 to 10, 17 to 29, and 88 to 107; these read MNQSRSRSDG, PQDH…ERRW, and DLRD…SSHE. 6 disordered regions span residues 1–29, 81–107, 121–142, 168–273, 286–345, and 499–576; these read MNQS…ERRW, EQLA…SSHE, GNAT…RTNP, DYTD…REGQ, RSNV…RRRG, and EADS…NPNN. Polar residues-rich tracts occupy residues 199 to 213, 250 to 264, and 286 to 297; these read SQTS…SNIP, ASRT…QSGG, and RSNVTVRNTNQR. Residues 303–313 are compositionally biased toward low complexity; sequence LRSTSNSRSRS. Composition is skewed to polar residues over residues 314–325 and 519–528; these read PIQRQSGTVYHN and ELSNLGTDNN. Residues 632 to 673 form an RING-type zinc finger; that stretch reads CSVCISDYVTGNKLRQLPCMHEFHIHCIDRWLSENCTCPICR.

Belongs to the RNF12 family. As to expression, weakly expressed in peripheral blood, spleen, prostate, testis and ovary. According to a report, it is preferentially expressed in testis and ovary and hardly detected in other tissues.

Its subcellular location is the nucleus. It localises to the cytoplasm. The protein localises to the cell projection. It is found in the axon. The protein resides in the PML body. It catalyses the reaction S-ubiquitinyl-[E2 ubiquitin-conjugating enzyme]-L-cysteine + [acceptor protein]-L-lysine = [E2 ubiquitin-conjugating enzyme]-L-cysteine + N(6)-ubiquitinyl-[acceptor protein]-L-lysine.. It functions in the pathway protein modification; protein ubiquitination. E3 ubiquitin-protein ligase mediating 'Lys-48'-linked polyubiquitination of LIMK1 and its subsequent targeting to the proteasome for degradation. Negatively regulates axonal outgrowth through regulation of the LIMK1 turnover. Mediates 'Lys-6' and 'Lys-27'-linked polyubiquitination of AR/androgen receptor thereby modulating its transcriptional activity. May also bind DNA and function as a transcriptional regulator. Mediates polyubiquitination of QKI in macrophages, leading to its degradation. The polypeptide is E3 ubiquitin-protein ligase RNF6 (Homo sapiens (Human)).